Here is a 317-residue protein sequence, read N- to C-terminus: Olfactory receptor 5K16 (317 aa).

Residues 1 to 28 (MEKTNHSLTTQFILVGFSDHPDLKTPLF) are Extracellular-facing. The N-linked (GlcNAc...) asparagine glycan is linked to N5. A helical transmembrane segment spans residues 29–49 (LLFSVIYLVTMVGNLGLVAVI). Residues 50–56 (YLEPRLH) lie on the Cytoplasmic side of the membrane. Residues 57–77 (TPMYIFLGNLALMDSCCSCAI) traverse the membrane as a helical segment. The Extracellular segment spans residues 78-93 (TPKILENFFSVDRRIS). Residues 94-114 (LYECMAQFYFLCLAETADCFL) form a helical membrane-spanning segment. A disulfide bridge connects residues C97 and C189. Residues 115-144 (LAAMAYDRYVAICNPLQYHSMMSKKLSIQM) lie on the Cytoplasmic side of the membrane. A helical transmembrane segment spans residues 145 to 165 (SIGTFITSNLHSLIHVGCLLR). The Extracellular portion of the chain corresponds to 166–198 (LTFCKSNRIDHFFCDILPLYRLSCTDPFINELM). The chain crosses the membrane as a helical span at residues 199-219 (IYIFSMPIQVFTITTVLVSYF). At 220-239 (CILLTIFKMKSKDGRGKAFS) the chain is on the cytoplasmic side. Residues 240 to 259 (TCASHFFSVSIFYVCLLMYI) form a helical membrane-spanning segment. Topologically, residues 260 to 268 (RPFDEGNKD) are extracellular. A helical transmembrane segment spans residues 269–289 (IPVAVFYTIIIPLLNPFIYSL). Topologically, residues 290–317 (RNKEVVNAVKKVMKTHSIFKNASASMAR) are cytoplasmic.

Belongs to the G-protein coupled receptor 1 family.

It localises to the cell membrane. Its function is as follows. Potential odorant receptor. This chain is Olfactory receptor 5K16, found in Mus musculus (Mouse).